Consider the following 1079-residue polypeptide: Intraflagellar transport protein 80 (1079 aa).

The tract at residues 495–514 (GDMIRPSTVQNQPSTQGLPN) is disordered. The segment covering 501–514 (STVQNQPSTQGLPN) has biased composition (polar residues).

It is found in the cell projection. The protein localises to the cilium. The protein resides in the flagellum. It localises to the cytoplasm. Its subcellular location is the cytoskeleton. It is found in the flagellum axoneme. The protein localises to the flagellum basal body. Its function is as follows. Component of the intraflagellar transport complex B (IFT-B) involved in flagellar assembly. This chain is Intraflagellar transport protein 80, found in Giardia intestinalis (strain ATCC 50803 / WB clone C6) (Giardia lamblia).